The chain runs to 303 residues: Ribonuclease HIII (303 aa).

One can recognise an RNase H type-2 domain in the interval 89-303 (WSVLGSDEVG…ANTKKAERLL (215 aa)). Residues D95, E96, and D199 each contribute to the a divalent metal cation site.

It belongs to the RNase HII family. RnhC subfamily. Mn(2+) is required as a cofactor. It depends on Mg(2+) as a cofactor.

The protein resides in the cytoplasm. It carries out the reaction Endonucleolytic cleavage to 5'-phosphomonoester.. In terms of biological role, endonuclease that specifically degrades the RNA of RNA-DNA hybrids. This Leuconostoc mesenteroides subsp. mesenteroides (strain ATCC 8293 / DSM 20343 / BCRC 11652 / CCM 1803 / JCM 6124 / NCDO 523 / NBRC 100496 / NCIMB 8023 / NCTC 12954 / NRRL B-1118 / 37Y) protein is Ribonuclease HIII.